A 312-amino-acid chain; its full sequence is MAKVFSFILVTTALTMGREISALEDCAQEQMRLRAQVRLLETRVKQQQVKIKQLLQENEVQFLDKGDENTVIDLGSKRQYADCSEIFNDGYKLSGFYKIKPLQSPAEFSVYCDMSDGGGWTVIQRRSDGSENFNRGWKDYENGFGNFVQKHGEYWLGNKNLHFLTTQEDYTLKIDLADFEKNSRYAQYKNFKVGDEKNFYELNIGEYSGTAGDSLAGNFHPEVQWWASHQRMKFSTWDRDHDNYEGNCAEEDQSGWWFNRCHSANLNGVYYSGPYTAKTDNGIVWYTWHGWWYSLKSVVMKIRPNDFIPNVI.

Positions Met-1 to Ala-22 are cleaved as a signal peptide. Positions Leu-23 to Gln-61 form a coiled coil. The Fibrinogen C-terminal domain occupies Leu-74 to Asp-306. 2 disulfide bridges follow: Cys-83/Cys-112 and Cys-248/Cys-261.

As to quaternary structure, homodimer. Interacts (via the Fibrinogen C-terminal domain) with LAG3 (via Ig-like domains 1 and 2). In terms of tissue distribution, under normal conditions, liver-specific.

The protein localises to the secreted. Immune suppressive molecule that inhibits antigen-specific T-cell activation by acting as a major ligand of LAG3. Responsible for LAG3 T-cell inhibitory function. Binds LAG3 independently from MHC class II (MHC-II). Secreted by, and promotes growth of, hepatocytes. The sequence is that of Fibrinogen-like protein 1 from Homo sapiens (Human).